The primary structure comprises 370 residues: Putative agmatine deiminase (370 aa).

C361 acts as the Amidino-cysteine intermediate in catalysis.

Belongs to the agmatine deiminase family.

It carries out the reaction agmatine + H2O = N-carbamoylputrescine + NH4(+). This Shewanella baltica (strain OS185) protein is Putative agmatine deiminase.